The primary structure comprises 92 residues: Putative pterin-4-alpha-carbinolamine dehydratase (92 aa).

The protein belongs to the pterin-4-alpha-carbinolamine dehydratase family.

The catalysed reaction is (4aS,6R)-4a-hydroxy-L-erythro-5,6,7,8-tetrahydrobiopterin = (6R)-L-erythro-6,7-dihydrobiopterin + H2O. The chain is Putative pterin-4-alpha-carbinolamine dehydratase from Acidobacterium capsulatum (strain ATCC 51196 / DSM 11244 / BCRC 80197 / JCM 7670 / NBRC 15755 / NCIMB 13165 / 161).